The chain runs to 531 residues: Dihydropyrimidinase (531 aa).

3 residues coordinate Zn(2+): His-103, His-105, and Lys-193. Lys-193 bears the N6-carboxylysine mark. Tyr-198 contributes to the substrate binding site. Positions 226 and 282 each coordinate Zn(2+). Residue Ser-332 coordinates substrate. Asp-359 contributes to the Zn(2+) binding site. Substrate is bound at residue Asn-380.

The protein belongs to the metallo-dependent hydrolases superfamily. Hydantoinase/dihydropyrimidinase family. As to quaternary structure, homotetramer. The cofactor is Zn(2+). In terms of processing, carboxylation allows a single lysine to coordinate two zinc ions.

Its subcellular location is the endoplasmic reticulum. The catalysed reaction is 5,6-dihydrouracil + H2O = 3-(carbamoylamino)propanoate + H(+). It participates in amino-acid biosynthesis; beta-alanine biosynthesis. Functionally, catalyzes the second step of the reductive pyrimidine degradation, the reversible hydrolytic ring opening of dihydropyrimidines. Can catalyze the ring opening of 5,6-dihydrouracil to N-carbamoyl-alanine and of 5,6-dihydrothymine to N-carbamoyl-amino isobutyrate. Involved in the recycling of nitrogen from nucleobases to general nitrogen metabolism. The sequence is that of Dihydropyrimidinase from Arabidopsis thaliana (Mouse-ear cress).